The following is a 343-amino-acid chain: Flavonoid 3'-O-methyltransferase FOMT (343 aa).

Residues Gly-184, Asp-207, Asp-227, Met-228, Met-240, and Lys-241 each coordinate S-adenosyl-L-homocysteine. The Proton acceptor role is filled by His-245. Active-site residues include Glu-273 and Glu-305.

This sequence belongs to the class I-like SAM-binding methyltransferase superfamily. Cation-independent O-methyltransferase family. In terms of assembly, homodimer.

It catalyses the reaction 3',5-dihydroxy-3,4',7-trimethoxyflavone + S-adenosyl-L-methionine = 5-hydroxy-3,7,3',4'-tetramethoxyflavone + S-adenosyl-L-homocysteine + H(+). It participates in flavonoid metabolism. Its activity is regulated as follows. Inhibited by nickel (NiCl(2) and NiSO(4)) and para-chloromercuribenzoate. Functionally, catalyzes the 3'- or 5'-O-methylation of partially methylated flavonols, but does not accept quercetin or caffeate as substrates for methylation. This is Flavonoid 3'-O-methyltransferase FOMT from Chrysosplenium americanum (American golden saxifrage).